The following is a 1072-amino-acid chain: DNA-directed RNA polymerase subunit beta (1072 aa).

Belongs to the RNA polymerase beta chain family. As to quaternary structure, in plastids the minimal PEP RNA polymerase catalytic core is composed of four subunits: alpha, beta, beta', and beta''. When a (nuclear-encoded) sigma factor is associated with the core the holoenzyme is formed, which can initiate transcription.

The protein resides in the plastid. It localises to the chloroplast. The catalysed reaction is RNA(n) + a ribonucleoside 5'-triphosphate = RNA(n+1) + diphosphate. In terms of biological role, DNA-dependent RNA polymerase catalyzes the transcription of DNA into RNA using the four ribonucleoside triphosphates as substrates. This Nasturtium officinale (Watercress) protein is DNA-directed RNA polymerase subunit beta.